Consider the following 616-residue polypeptide: Chaperone protein HscA (616 aa).

It belongs to the heat shock protein 70 family.

In terms of biological role, chaperone involved in the maturation of iron-sulfur cluster-containing proteins. Has a low intrinsic ATPase activity which is markedly stimulated by HscB. Involved in the maturation of IscU. The protein is Chaperone protein HscA of Salmonella agona (strain SL483).